A 649-amino-acid chain; its full sequence is tRNA-guanine(15) transglycosylase (649 aa).

The active-site Nucleophile is the Asp-88. 2 residues coordinate substrate: Asp-123 and Ala-194. Positions 280, 282, and 285 each coordinate Zn(2+). Residues 573-648 (KYRIVIDSSV…VAVTLRGGLK (76 aa)) enclose the PUA domain.

This sequence belongs to the archaeosine tRNA-ribosyltransferase family. Zn(2+) is required as a cofactor.

The enzyme catalyses guanosine(15) in tRNA + 7-cyano-7-deazaguanine = 7-cyano-7-carbaguanosine(15) in tRNA + guanine. It participates in tRNA modification; archaeosine-tRNA biosynthesis. In terms of biological role, exchanges the guanine residue with 7-cyano-7-deazaguanine (preQ0) at position 15 in the dihydrouridine loop (D-loop) of archaeal tRNAs. The chain is tRNA-guanine(15) transglycosylase from Methanococcus maripaludis (strain C7 / ATCC BAA-1331).